The chain runs to 407 residues: Bifunctional enzyme IspD/IspF (407 aa).

The 2-C-methyl-D-erythritol 4-phosphate cytidylyltransferase stretch occupies residues 1–247 (MVHIQADGAR…RLSHNALPDV (247 aa)). The 2-C-methyl-D-erythritol 2,4-cyclodiphosphate synthase stretch occupies residues 248–407 (RTGNGYDVHQ…ATVVFQGKPQ (160 aa)). The a divalent metal cation site is built by Asp254 and His256. 4-CDP-2-C-methyl-D-erythritol 2-phosphate is bound by residues 254 to 256 (DVH) and 280 to 281 (HS). His288 contacts a divalent metal cation. 4-CDP-2-C-methyl-D-erythritol 2-phosphate-binding positions include 302–304 (DIG), 378–381 (TTNE), Phe385, and Arg388.

The protein in the N-terminal section; belongs to the IspD/TarI cytidylyltransferase family. IspD subfamily. It in the C-terminal section; belongs to the IspF family. A divalent metal cation serves as cofactor.

It carries out the reaction 2-C-methyl-D-erythritol 4-phosphate + CTP + H(+) = 4-CDP-2-C-methyl-D-erythritol + diphosphate. The catalysed reaction is 4-CDP-2-C-methyl-D-erythritol 2-phosphate = 2-C-methyl-D-erythritol 2,4-cyclic diphosphate + CMP. Its pathway is isoprenoid biosynthesis; isopentenyl diphosphate biosynthesis via DXP pathway; isopentenyl diphosphate from 1-deoxy-D-xylulose 5-phosphate: step 2/6. It functions in the pathway isoprenoid biosynthesis; isopentenyl diphosphate biosynthesis via DXP pathway; isopentenyl diphosphate from 1-deoxy-D-xylulose 5-phosphate: step 4/6. Bifunctional enzyme that catalyzes the formation of 4-diphosphocytidyl-2-C-methyl-D-erythritol from CTP and 2-C-methyl-D-erythritol 4-phosphate (MEP) (IspD), and catalyzes the conversion of 4-diphosphocytidyl-2-C-methyl-D-erythritol 2-phosphate (CDP-ME2P) to 2-C-methyl-D-erythritol 2,4-cyclodiphosphate (ME-CPP) with a corresponding release of cytidine 5-monophosphate (CMP) (IspF). In Allorhizobium ampelinum (strain ATCC BAA-846 / DSM 112012 / S4) (Agrobacterium vitis (strain S4)), this protein is Bifunctional enzyme IspD/IspF.